The following is a 1232-amino-acid chain: uncharacterized protein (1232 aa).

Belongs to the Mg-chelatase subunit H family.

This is an uncharacterized protein from Methanocaldococcus jannaschii (strain ATCC 43067 / DSM 2661 / JAL-1 / JCM 10045 / NBRC 100440) (Methanococcus jannaschii).